The chain runs to 849 residues: Protein translocase subunit SecA (849 aa).

Residues Gln85, 103 to 107, and Asp493 contribute to the ATP site; that span reads GEGKT. Positions 832, 834, 843, and 844 each coordinate Zn(2+).

The protein belongs to the SecA family. As to quaternary structure, monomer and homodimer. Part of the essential Sec protein translocation apparatus which comprises SecA, SecYEG and auxiliary proteins SecDF. Other proteins may also be involved. The cofactor is Zn(2+).

The protein localises to the cell membrane. It localises to the cytoplasm. It carries out the reaction ATP + H2O + cellular proteinSide 1 = ADP + phosphate + cellular proteinSide 2.. In terms of biological role, part of the Sec protein translocase complex. Interacts with the SecYEG preprotein conducting channel. Has a central role in coupling the hydrolysis of ATP to the transfer of proteins into and across the cell membrane, serving as an ATP-driven molecular motor driving the stepwise translocation of polypeptide chains across the membrane. This is Protein translocase subunit SecA from Streptococcus thermophilus (strain CNRZ 1066).